The chain runs to 272 residues: Aquaporin FA-CHIP (272 aa).

At 1–17 (MASEFKKKAFWRAVIAE) the chain is on the cytoplasmic side. The chain crosses the membrane as a helical span at residues 18–35 (FLAMILFVFISIGAALGF). Topologically, residues 36-52 (NFPIEEKANQTVGRSQD) are extracellular. N-linked (GlcNAc...) asparagine glycosylation occurs at N44. Residues 53-71 (IVKVSLAFGISIATMAQSV) traverse the membrane as a helical segment. Over 72 to 97 (GHVSGAHLNPAVTLGCLLSCQISILK) the chain is Cytoplasmic. The NPA 1 motif lies at 80–82 (NPA). Residues 98–119 (AVMYIIAQCLGAVVATAILSGI) traverse the membrane as a helical segment. Topologically, residues 120–139 (TSGLENNSLGLNGLSPGVSA) are extracellular. N-linked (GlcNAc...) asparagine glycosylation is present at N125. A helical membrane pass occupies residues 140-160 (GQGLGVEILVTFQLVLCVVAV). The Cytoplasmic segment spans residues 161-168 (TDRRRHDV). Residues 169 to 188 (SGSVPLAIGLSVALGHLIAI) traverse the membrane as a helical segment. The Extracellular portion of the chain corresponds to 189 to 214 (DYTGCGMNPARSFGSAVLTKNFTYHW). The NPA 2 signature appears at 196 to 198 (NPA). N-linked (GlcNAc...) asparagine glycosylation is present at N209. Residues 215 to 236 (IFWVGPMIGGAAAAIIYDFILA) traverse the membrane as a helical segment. Residues 237-272 (PRTSDLTDRMKVWTNGQVEEYELDGDDNTRVEMKPK) lie on the Cytoplasmic side of the membrane.

It belongs to the MIP/aquaporin (TC 1.A.8) family.

The protein resides in the membrane. Its function is as follows. Forms a water-specific channel. This Pelophylax lessonae (Pool frog) protein is Aquaporin FA-CHIP (AQPA).